The following is a 338-amino-acid chain: CRISPR-associated endonuclease Cas1 (338 aa).

Glu155, His220, and Glu235 together coordinate Mn(2+).

It belongs to the CRISPR-associated endonuclease Cas1 family. In terms of assembly, homodimer, forms a heterotetramer with a Cas2 homodimer. Mg(2+) is required as a cofactor. Requires Mn(2+) as cofactor.

Functionally, CRISPR (clustered regularly interspaced short palindromic repeat), is an adaptive immune system that provides protection against mobile genetic elements (viruses, transposable elements and conjugative plasmids). CRISPR clusters contain spacers, sequences complementary to antecedent mobile elements, and target invading nucleic acids. CRISPR clusters are transcribed and processed into CRISPR RNA (crRNA). Acts as a dsDNA endonuclease. Involved in the integration of spacer DNA into the CRISPR cassette. The type III-A Csm effector complex binds crRNA and acts as a crRNA-guided RNase, DNase and cyclic oligoadenylate synthase; binding of target RNA cognate to the crRNA is required for all activities. This chain is CRISPR-associated endonuclease Cas1, found in Mycobacterium tuberculosis (strain CDC 1551 / Oshkosh).